Here is a 31-residue protein sequence, read N- to C-terminus: Chymotrypsin (31 aa).

A Peptidase S1 domain is found at 1 to 31; it reads IVGGVEAVPGVWPYQAALFIIDMYFCGGSLI.

This sequence belongs to the peptidase S1 family.

It is found in the secreted. Its subcellular location is the extracellular space. The enzyme catalyses Preferential cleavage: Tyr-|-Xaa, Trp-|-Xaa, Phe-|-Xaa, Leu-|-Xaa.. The polypeptide is Chymotrypsin (Penaeus monodon (Giant tiger prawn)).